Here is a 63-residue protein sequence, read N- to C-terminus: Keratin-associated protein 19-7 (63 aa).

This sequence belongs to the KRTAP type 19 family. As to quaternary structure, interacts with hair keratins.

In the hair cortex, hair keratin intermediate filaments are embedded in an interfilamentous matrix, consisting of hair keratin-associated proteins (KRTAP), which are essential for the formation of a rigid and resistant hair shaft through their extensive disulfide bond cross-linking with abundant cysteine residues of hair keratins. The matrix proteins include the high-sulfur and high-glycine-tyrosine keratins. This is Keratin-associated protein 19-7 (KRTAP19-7) from Homo sapiens (Human).